The primary structure comprises 307 residues: MTDSSYDAQAVRSWLQGLQTHIADTLGAFDGTPFATDAWQRAPGEKLRGGGYTRILEGGKFFERAGIGFSDVAGDALPGSASAARPQLAGRGFEAMGVSLVLHPHNPHCPTVHMNVRLLIATKPGEEPVFWFGGGMDLTPYYGYEEDARHFHRTCRDALQPYGADLYPSFKRWCDEYFFLKHRNEARGIGGIFFDDFSAPGFDQSFAMLKSVGDAFLKAYLPIVEKRRNIPYGQAERDFQAYRRGRYVEFNLVFDRGTLFGLQSGGRTESILMSMPPVVNWRYNWHPEPGTPEARLYSDFLVPREWV.

Substrate is bound at residue S99. Residues H103 and H113 each contribute to the a divalent metal cation site. H113 (proton donor) is an active-site residue. Residue 115–117 (NVR) participates in substrate binding. H152 and H182 together coordinate a divalent metal cation. The important for dimerization stretch occupies residues 247-282 (YVEFNLVFDRGTLFGLQSGGRTESILMSMPPVVNWR). 265–267 (GGR) lines the substrate pocket.

Belongs to the aerobic coproporphyrinogen-III oxidase family. Homodimer. It depends on a divalent metal cation as a cofactor.

The protein localises to the cytoplasm. It carries out the reaction coproporphyrinogen III + O2 + 2 H(+) = protoporphyrinogen IX + 2 CO2 + 2 H2O. It participates in porphyrin-containing compound metabolism; protoporphyrin-IX biosynthesis; protoporphyrinogen-IX from coproporphyrinogen-III (O2 route): step 1/1. Its function is as follows. Involved in the heme biosynthesis. Catalyzes the aerobic oxidative decarboxylation of propionate groups of rings A and B of coproporphyrinogen-III to yield the vinyl groups in protoporphyrinogen-IX. This is Oxygen-dependent coproporphyrinogen-III oxidase from Paraburkholderia phytofirmans (strain DSM 17436 / LMG 22146 / PsJN) (Burkholderia phytofirmans).